The chain runs to 397 residues: Heterogeneous nuclear ribonucleoprotein K homolog (397 aa).

Positions 1–41 are disordered; it reads MMIKVGAAINGTDSPKAMKREHDNDDGDRTGRHKRPKTDGF. Residues 16-30 are compositionally biased toward basic and acidic residues; the sequence is KAMKREHDNDDGDRT. KH domains follow at residues 49–111 and 124–189; these read KFEV…LKDV and PCEV…IEEV. Residues 220–279 are disordered; that stretch reads GGFPGNMPAGGPPNNRGPAPQRGGQGPPGGPRSYGGAITQGGGQRSFEAGDFQQFRGGPG. Low complexity predominate over residues 224-241; that stretch reads GNMPAGGPPNNRGPAPQR. The KH 3 domain maps to 316 to 379; sequence VTTAQVTIPS…QQIHSAQYLL (64 aa).

Interacts with alg-1; the interaction is direct and may be strengthened through RNA-protein association. Expressed in gut, muscle, neuronal and hypodermal tissues. Highly expressed in the germline and oocytes.

The protein localises to the nucleus. It is found in the cytoplasm. In terms of biological role, RNA-binding protein which functions together with alg-1, a component of the miRNA loading complex, to modulate the processing and activity of specific miRNAs such as miR-58 and let-7 to regulate gene expression at the post-transcriptional level during embryonic, hypodermal and neuronal development. Promotes the lsy-6-mediated repression of cog-1 in uterine cells. In embryos, may play a role in the DNA damage response. This Caenorhabditis elegans protein is Heterogeneous nuclear ribonucleoprotein K homolog.